Consider the following 944-residue polypeptide: Weak acid resistance protein 1 (944 aa).

A DNA-binding region (zn(2)-C6 fungal-type) is located at residues 76 to 109; that stretch reads CVCCHSLKQKCEPSDVNDIYRKPCRRCLKHKKLC. Disordered regions lie at residues 114 to 171 and 197 to 225; these read SKRT…AKQF and SYGAREAETTSTGEITTNNHTKSNGSVPT. Residue threonine 128 is modified to Phosphothreonine. Polar residues-rich tracts occupy residues 135–144 and 205–225; these read VNVSTKSKGP and TTSTGEITTNNHTKSNGSVPT.

Homodimer. In terms of processing, phosphorylation is required for PDR12 induction.

It is found in the nucleus. Transcription factor which binds to a weak acid response element (WARE) to mediate stress induction of PDR12 and FUN34, encoding an acid transporter and a putative ammonia transporter, respectively. The protein is Weak acid resistance protein 1 (WAR1) of Saccharomyces cerevisiae (strain ATCC 204508 / S288c) (Baker's yeast).